The following is a 116-amino-acid chain: Iron-sulfur cluster insertion protein ErpA (116 aa).

Iron-sulfur cluster contacts are provided by Cys44, Cys108, and Cys110.

Belongs to the HesB/IscA family. Homodimer. Iron-sulfur cluster serves as cofactor.

Functionally, required for insertion of 4Fe-4S clusters for at least IspG. The chain is Iron-sulfur cluster insertion protein ErpA from Shewanella oneidensis (strain ATCC 700550 / JCM 31522 / CIP 106686 / LMG 19005 / NCIMB 14063 / MR-1).